The sequence spans 139 residues: Desampylase (139 aa).

In terms of domain architecture, MPN spans 6 to 139; sequence LSLAADARDS…EFRELSVAVE (134 aa). Residue glutamate 31 is the Proton donor/acceptor of the active site. Residues histidine 88, histidine 90, and aspartate 101 each coordinate Zn(2+). Positions 88-101 match the JAMM motif motif; that stretch reads HSHPESDPVPSATD.

The protein belongs to the peptidase M67B family. Monomer. Zn(2+) is required as a cofactor.

It catalyses the reaction an N(6)-[small archaeal modifier protein]-[protein]-L-lysine + H2O = a [protein]-L-lysine + a [small archaeal modifier protein].. Its activity is regulated as follows. Inhibited by EDTA and N-ethylmaleimide (NEM) in vitro. Its function is as follows. Metalloprotease that displays desampylase (DSAMP) activity, cleaving ubiquitin-like small archaeal modifier proteins (SAMP1, SAMP2 and SAMP3) from protein conjugates (isopeptide- and linear-linked). Thus, likely regulates sampylation and the pools of 'free' SAMP available for protein modification. Functions as a specific and not a general protease since it is unable to hydrolyze a variety of unmodified proteins otherwise hydrolyzed by proteinase K. This chain is Desampylase, found in Haloferax volcanii (strain ATCC 29605 / DSM 3757 / JCM 8879 / NBRC 14742 / NCIMB 2012 / VKM B-1768 / DS2) (Halobacterium volcanii).